The primary structure comprises 469 residues: Argininosuccinate lyase (469 aa).

It belongs to the lyase 1 family. Argininosuccinate lyase subfamily.

It is found in the cytoplasm. The catalysed reaction is 2-(N(omega)-L-arginino)succinate = fumarate + L-arginine. It functions in the pathway amino-acid biosynthesis; L-arginine biosynthesis; L-arginine from L-ornithine and carbamoyl phosphate: step 3/3. This Burkholderia lata (strain ATCC 17760 / DSM 23089 / LMG 22485 / NCIMB 9086 / R18194 / 383) protein is Argininosuccinate lyase.